The primary structure comprises 822 residues: Dimethyl sulfoxide/trimethylamine N-oxide reductase (822 aa).

A signal peptide (tat-type signal) is located at residues 1–42 (MTKLSGQELHAELSRRAFLSYTAAVGALGLCGTSLLAQGARA). Mo-bis(molybdopterin guanine dinucleotide)-binding positions include tryptophan 158, 158–160 (WKS), serine 189, 232–233 (KT), 262–263 (IN), 283–285 (QTD), 364–365 (WS), arginine 368, asparagine 476, histidine 480, 500–501 (QD), arginine 523, aspartate 553, 683–686 (ASHP), arginine 689, 691–693 (HSQ), asparagine 779, and 796–797 (GQ).

This sequence belongs to the prokaryotic molybdopterin-containing oxidoreductase family. In terms of assembly, homodimer. Requires Mo-bis(molybdopterin guanine dinucleotide) as cofactor. Predicted to be exported by the Tat system. The position of the signal peptide cleavage has been experimentally proven.

The protein resides in the periplasm. The catalysed reaction is dimethyl sulfide + a menaquinone + H2O = dimethyl sulfoxide + a menaquinol. It catalyses the reaction trimethylamine + 2 Fe(III)-[cytochrome c] + H2O = trimethylamine N-oxide + 2 Fe(II)-[cytochrome c] + 3 H(+). Catalyzes the reduction of dimethyl sulfoxide (DMSO) and trimethylamine N-oxide (TMAO) to dimethyl sulfide (DMS) and trimethylamine, respectively. The terminal DMSO reductase can also use various sulfoxides and N-oxide compounds as terminal electron acceptor in addition to DMSO and TMAO. This Cereibacter sphaeroides (Rhodobacter sphaeroides) protein is Dimethyl sulfoxide/trimethylamine N-oxide reductase (dmsA).